A 261-amino-acid polypeptide reads, in one-letter code: Putative carbamate hydrolase RutD (261 aa).

An AB hydrolase-1 domain is found at 14–119; the sequence is PTILLSSGLG…LINAWSKADP (106 aa).

Belongs to the AB hydrolase superfamily. Hydrolase RutD family.

The enzyme catalyses carbamate + 2 H(+) = NH4(+) + CO2. Its function is as follows. Involved in pyrimidine catabolism. May facilitate the hydrolysis of carbamate, a reaction that can also occur spontaneously. This is Putative carbamate hydrolase RutD from Agrobacterium fabrum (strain C58 / ATCC 33970) (Agrobacterium tumefaciens (strain C58)).